A 103-amino-acid chain; its full sequence is Small ribosomal subunit protein uS10 (103 aa).

The protein belongs to the universal ribosomal protein uS10 family. Part of the 30S ribosomal subunit.

Functionally, involved in the binding of tRNA to the ribosomes. The polypeptide is Small ribosomal subunit protein uS10 (Nitratiruptor sp. (strain SB155-2)).